The chain runs to 108 residues: Abdominal ganglion neuropeptide R3-14 (108 aa).

The first 23 residues, 1-23, serve as a signal peptide directing secretion; that stretch reads MQVLHLCLAVSIAVALLSQAAWS. Residues glutamate 24 and glutamate 52 each carry the pyrrolidone carboxylic acid (Glu); partial modification. Glutamine 66 carries the pyrrolidone carboxylic acid modification.

Post-translationally, the partial formation of pyroglutamate from N-terminal glutamic acid in peptides isolated from single cells is detected by mass spectrometry. There are indications this modification depends on a heat sensitive factor. As to expression, neurons R3-R14. A cluster of 12 giant neurons located on the right side of the abdominal ganglion.

It is found in the secreted. Its function is as follows. HRBP is a myoactive peptide that excites Aplysia heart and enhances gut motility in vitro. The protein is Abdominal ganglion neuropeptide R3-14 of Aplysia californica (California sea hare).